A 581-amino-acid polypeptide reads, in one-letter code: Lipoprotein LpqB (581 aa).

The N-terminal stretch at 1–23 (MRNHVSRYLTALIAVGCAATTAA) is a signal peptide. Cys-24 carries the N-palmitoyl cysteine lipid modification. Cys-24 is lipidated: S-diacylglycerol cysteine.

Belongs to the LpqB lipoprotein family.

The protein resides in the cell membrane. The sequence is that of Lipoprotein LpqB from Corynebacterium diphtheriae (strain ATCC 700971 / NCTC 13129 / Biotype gravis).